The following is a 130-amino-acid chain: Small ribosomal subunit protein uS8 (130 aa).

The protein belongs to the universal ribosomal protein uS8 family. Part of the 30S ribosomal subunit.

In terms of biological role, one of the primary rRNA binding proteins, it binds directly to 16S rRNA central domain where it helps coordinate assembly of the platform of the 30S subunit. The sequence is that of Small ribosomal subunit protein uS8 from Methanococcus maripaludis (strain C6 / ATCC BAA-1332).